The chain runs to 217 residues: MSIGILGKKLGMSQLFDDKGNAVPVTLIEAGPCRVTQLKTNALDGYTAIQIGYGVSKEKHISKPEKGHLLKSGEELLKHLKEYRVEETSSYEIGNQITVKNFEVGQKVDISGKSMGRGFSGYQKRHGFSRGPMSHGSKNHRAPGSTGAGTTPGRIYPGKRMAGRYGGKQITTKGLLVLKIDDQKNLLVVKGSVPGKPGSIVNIKPNNVVGKKGGEKS.

A disordered region spans residues 129-162; the sequence is SRGPMSHGSKNHRAPGSTGAGTTPGRIYPGKRMA. Positions 142 to 153 are enriched in low complexity; the sequence is APGSTGAGTTPG.

The protein belongs to the universal ribosomal protein uL3 family. In terms of assembly, part of the 50S ribosomal subunit. Forms a cluster with proteins L14 and L19.

In terms of biological role, one of the primary rRNA binding proteins, it binds directly near the 3'-end of the 23S rRNA, where it nucleates assembly of the 50S subunit. The chain is Large ribosomal subunit protein uL3 from Prochlorococcus marinus (strain MIT 9215).